Consider the following 170-residue polypeptide: PQMLSANERLKNNFNILYNQIRQYPAYYFKVASNVPTYSDICQFFSVMYQGFQIVNHSGDVFIHACRENPQSKGDFVGDKFHISIAREQVPLAFQILSGLLFSEDSPIDKWKITDMNRVSQQSRVGIGAQFTLYVKSDQECSQYSALLLHKIRQFIMCLESNLLRSKIAP.

Histidine 82 serves as the catalytic Proton donor. Lysine 112 functions as the Proton acceptor in the catalytic mechanism.

Belongs to the phosphothreonine lyase family.

It localises to the secreted. Catalyzes the removal of the phosphate group from the phosphothreonine in the mitogen-activated protein kinases such as MAPK2/ERK2, MAPK3/ERK1, MAPK8 and MAPK14 in an irreversible reaction, thus preventing the downstream phosphorylation of histone H3. This epigenetic modification results in inhibition of the transcription of a specific subset of pro-inflammatory genes, and ultimately to a reduced immune response against the invading pathogen. The diminished immune response enhances the bacterium's ability to disseminate and multiply within the host. This chain is Phosphothreonine lyase OspF (ospF), found in Shigella boydii.